The sequence spans 358 residues: MKKILALLVIAPLLISCSGKKNTEVNEALVKDTNGFEILMGQFAHNIENIWGLNEVLIAGPKDYVKYTDQYQTRSHINFDSGAITIETIATTDPAAHLRQAIISTLLMGDDPGSIDLYSDVNDIQISKEPFLYGQVLDNKGAPIRWEWRAAHFADYLVQTKLQKRTSGLHVIYSVTIQLVPNHLDKRAHKYLPMVRKASEKYGVEESLILAIMQTESSFNPYAVSGSDALGLMQVVQHTAGKDVFQMRGKWGKPSRSYLFDPENNIDTGTAYLAILQNNYLGGIQNPTSRRYAVITAYNGGAGSVLRVFSSDRTRAVGIINGMQPGDVYQTLTTKHPASESRHYLVKVNNAQKSYRRR.

Positions 1 to 16 are cleaved as a signal peptide; it reads MKKILALLVIAPLLIS. Residue C17 is the site of N-palmitoyl cysteine attachment. Residue C17 is the site of S-diacylglycerol cysteine attachment.

The protein belongs to the transglycosylase Slt family.

The protein resides in the cell outer membrane. It catalyses the reaction Exolytic cleavage of the (1-&gt;4)-beta-glycosidic linkage between N-acetylmuramic acid (MurNAc) and N-acetylglucosamine (GlcNAc) residues in peptidoglycan, from either the reducing or the non-reducing ends of the peptidoglycan chains, with concomitant formation of a 1,6-anhydrobond in the MurNAc residue.. In terms of biological role, murein-degrading enzyme. May play a role in recycling of muropeptides during cell elongation and/or cell division. The protein is Membrane-bound lytic murein transglycosylase C of Serratia proteamaculans (strain 568).